The sequence spans 277 residues: MEMO1 family protein Tpet_0837 (277 aa).

It belongs to the MEMO1 family.

The sequence is that of MEMO1 family protein Tpet_0837 from Thermotoga petrophila (strain ATCC BAA-488 / DSM 13995 / JCM 10881 / RKU-1).